The sequence spans 260 residues: Indole-3-glycerol phosphate synthase (260 aa).

This sequence belongs to the TrpC family.

The enzyme catalyses 1-(2-carboxyphenylamino)-1-deoxy-D-ribulose 5-phosphate + H(+) = (1S,2R)-1-C-(indol-3-yl)glycerol 3-phosphate + CO2 + H2O. It participates in amino-acid biosynthesis; L-tryptophan biosynthesis; L-tryptophan from chorismate: step 4/5. The protein is Indole-3-glycerol phosphate synthase of Acetivibrio thermocellus (strain ATCC 27405 / DSM 1237 / JCM 9322 / NBRC 103400 / NCIMB 10682 / NRRL B-4536 / VPI 7372) (Clostridium thermocellum).